The sequence spans 260 residues: Thiamine thiazole synthase (260 aa).

Residues alanine 36, 55–56 (EQ), glycine 63, and 154–156 (HVD) contribute to the NAD(+) site. Fe cation-binding residues include aspartate 156 and histidine 171. Methionine 224 contacts NAD(+). Arginine 234 serves as a coordination point for glycine.

Belongs to the THI4 family. As to quaternary structure, homooctamer; tetramer of dimers. Fe(2+) serves as cofactor.

The catalysed reaction is hydrogen sulfide + glycine + NAD(+) = ADP-5-ethyl-4-methylthiazole-2-carboxylate + nicotinamide + 3 H2O + H(+). Its pathway is cofactor biosynthesis; thiamine diphosphate biosynthesis. In terms of biological role, involved in the biosynthesis of the thiazole moiety of thiamine. Catalyzes the conversion of NAD and glycine to adenosine diphosphate 5-(2-hydroxyethyl)-4-methylthiazole-2-carboxylate (ADT), an adenylated thiazole intermediate, using free sulfide as a source of sulfur. This chain is Thiamine thiazole synthase, found in Methanosarcina acetivorans (strain ATCC 35395 / DSM 2834 / JCM 12185 / C2A).